Here is a 640-residue protein sequence, read N- to C-terminus: Threonine--tRNA ligase (640 aa).

Positions 1 to 60 (MKITFPDGAVKEFEPGVSTADIAASISPGLKKKALAGKLNGELLDLVTPIHEDGAIEIVT) constitute a TGS domain. The segment at 241-538 (DHRKLGKELE…LIEEYKGAFP (298 aa)) is catalytic. Zn(2+) contacts are provided by cysteine 334, histidine 385, and histidine 515.

The protein belongs to the class-II aminoacyl-tRNA synthetase family. As to quaternary structure, homodimer. The cofactor is Zn(2+).

The protein resides in the cytoplasm. The enzyme catalyses tRNA(Thr) + L-threonine + ATP = L-threonyl-tRNA(Thr) + AMP + diphosphate + H(+). Its function is as follows. Catalyzes the attachment of threonine to tRNA(Thr) in a two-step reaction: L-threonine is first activated by ATP to form Thr-AMP and then transferred to the acceptor end of tRNA(Thr). Also edits incorrectly charged L-seryl-tRNA(Thr). This chain is Threonine--tRNA ligase, found in Listeria monocytogenes serovar 1/2a (strain ATCC BAA-679 / EGD-e).